Reading from the N-terminus, the 639-residue chain is UvrABC system protein C (639 aa).

The GIY-YIG domain maps to 20–97 (ERSGVYRMFD…IKKFQPKFNI (78 aa)). Residues 207–242 (KELQENLSRKMEELSSQMRFEEAAEIRDRIKALSYV) enclose the UVR domain.

It belongs to the UvrC family. Interacts with UvrB in an incision complex.

Its subcellular location is the cytoplasm. Functionally, the UvrABC repair system catalyzes the recognition and processing of DNA lesions. UvrC both incises the 5' and 3' sides of the lesion. The N-terminal half is responsible for the 3' incision and the C-terminal half is responsible for the 5' incision. The protein is UvrABC system protein C of Rickettsia peacockii (strain Rustic).